Consider the following 259-residue polypeptide: NH(3)-dependent NAD(+) synthetase (259 aa).

33–40 (GLSGGIDS) contacts ATP. Residue D39 coordinates Mg(2+). R119 contributes to the deamido-NAD(+) binding site. T139 lines the ATP pocket. Mg(2+) is bound at residue E144. The deamido-NAD(+) site is built by K152 and D159. 2 residues coordinate ATP: K168 and S190. 249–250 (HK) contacts deamido-NAD(+).

The protein belongs to the NAD synthetase family. Homodimer.

It carries out the reaction deamido-NAD(+) + NH4(+) + ATP = AMP + diphosphate + NAD(+) + H(+). It functions in the pathway cofactor biosynthesis; NAD(+) biosynthesis; NAD(+) from deamido-NAD(+) (ammonia route): step 1/1. Its function is as follows. Catalyzes the ATP-dependent amidation of deamido-NAD to form NAD. Uses ammonia as a nitrogen source. This chain is NH(3)-dependent NAD(+) synthetase, found in Methanocaldococcus jannaschii (strain ATCC 43067 / DSM 2661 / JAL-1 / JCM 10045 / NBRC 100440) (Methanococcus jannaschii).